The chain runs to 291 residues: 4-hydroxy-tetrahydrodipicolinate synthase (291 aa).

Thr45 serves as a coordination point for pyruvate. The active-site Proton donor/acceptor is the Tyr133. Lys161 (schiff-base intermediate with substrate) is an active-site residue. Ile203 serves as a coordination point for pyruvate.

It belongs to the DapA family. In terms of assembly, homotetramer; dimer of dimers.

The protein localises to the cytoplasm. The enzyme catalyses L-aspartate 4-semialdehyde + pyruvate = (2S,4S)-4-hydroxy-2,3,4,5-tetrahydrodipicolinate + H2O + H(+). Its pathway is amino-acid biosynthesis; L-lysine biosynthesis via DAP pathway; (S)-tetrahydrodipicolinate from L-aspartate: step 3/4. In terms of biological role, catalyzes the condensation of (S)-aspartate-beta-semialdehyde [(S)-ASA] and pyruvate to 4-hydroxy-tetrahydrodipicolinate (HTPA). This is 4-hydroxy-tetrahydrodipicolinate synthase from Methylococcus capsulatus (strain ATCC 33009 / NCIMB 11132 / Bath).